A 468-amino-acid chain; its full sequence is Neuronal acetylcholine receptor subunit alpha-5 (468 aa).

The signal sequence occupies residues 1–22; sequence MAARGSGPRALRLLLLVQLVAG. Topologically, residues 23–254 are extracellular; that stretch reads RCGLAGAAGG…VIKRLPLFYT (232 aa). N-linked (GlcNAc...) asparagine glycans are attached at residues Asn-155, Asn-183, and Asn-229. A disulfide bridge connects residues Cys-170 and Cys-184. The cysteines at positions 234 and 235 are disulfide-linked. 3 helical membrane-spanning segments follow: residues 255–275, 282–302, and 317–337; these read LFLI…FYLP, ICLC…IEEI, and LVFT…AINI. At 338–429 the chain is on the cytoplasmic side; that stretch reads HHRSSSTHNA…WKFIAQVLDR (92 aa). Residues 430 to 451 form a helical membrane-spanning segment; it reads MFLWTFLFVSIVGSLGLFVPVI. Residues 452 to 468 are Extracellular-facing; that stretch reads YKWANILIPVHIGNANK.

It belongs to the ligand-gated ion channel (TC 1.A.9) family. Acetylcholine receptor (TC 1.A.9.1) subfamily. Alpha-5/CHRNA5 sub-subfamily. In terms of assembly, neuronal AChR that forms heteropentamers composed of two different type of subunits: alpha and non-alpha (beta). CHRNA5/alpha-5 subunit is only able to form functional nAChRs when co-assembled with another alpha subunit, can be combined to CHRNA4/alpha-4 or CHRNA3/alpha-3 and CHRNB4/beta-4 or CHRNB2/beta-2 to give rise to functional receptors. Interacts with LYPD6.

The protein localises to the synaptic cell membrane. Its subcellular location is the cell membrane. The enzyme catalyses Ca(2+)(in) = Ca(2+)(out). It catalyses the reaction K(+)(in) = K(+)(out). The catalysed reaction is Na(+)(in) = Na(+)(out). Activated by a myriad of ligands such as acetylcholine, cytisine, nicotine, choline and epibatidine. Its function is as follows. Component of neuronal acetylcholine receptors (nAChRs) that function as pentameric, ligand-gated cation channels with high calcium permeability among other activities. nAChRs are excitatory neurotrasnmitter receptors formed by a collection of nAChR subunits known to mediate synaptic transmission in the nervous system and the neuromuscular junction. Each nAchR subunit confers differential attributes to channel properties, including activation, deactivation and desensitization kinetics, pH sensitivity, cation permeability, and binding to allosteric modulators. Has an accessory rather than functional role and is only able to form functional nAChRs when co-assembled with another beta subunit. Participates in pentameric assemblies along with CHRNA3, CHRNA4, CHRNB2 and CHRNB4. Increases receptor sensitivity to acetylcholine and nicotine when associated with CHRNA4 and CHRNB2. Plays a role in nicotine addiction. The polypeptide is Neuronal acetylcholine receptor subunit alpha-5 (Homo sapiens (Human)).